The sequence spans 111 residues: Putative lipid-binding protein AIR1 (111 aa).

A signal peptide spans 1–23; the sequence is MAPRTPLALFVSLNLLFFTYTSA. Intrachain disulfides connect Cys28–Cys58, Cys38–Cys57, and Cys74–Cys110.

This sequence belongs to the plant LTP family. PEARLI1 subfamily.

The protein localises to the secreted. The sequence is that of Putative lipid-binding protein AIR1 (AIR1) from Arabidopsis thaliana (Mouse-ear cress).